Consider the following 174-residue polypeptide: Ribosome maturation factor RimP (174 aa).

This sequence belongs to the RimP family.

The protein localises to the cytoplasm. In terms of biological role, required for maturation of 30S ribosomal subunits. The chain is Ribosome maturation factor RimP from Acinetobacter baumannii (strain SDF).